A 175-amino-acid chain; its full sequence is FMN reductase (NADH) RutF (175 aa).

Belongs to the non-flavoprotein flavin reductase family. RutF subfamily.

It catalyses the reaction FMNH2 + NAD(+) = FMN + NADH + 2 H(+). Its function is as follows. Catalyzes the reduction of FMN to FMNH2 which is used to reduce pyrimidine by RutA via the Rut pathway. This is FMN reductase (NADH) RutF from Serratia proteamaculans (strain 568).